The chain runs to 349 residues: Phosphate carrier protein, mitochondrial (349 aa).

Solcar repeat units lie at residues 47 to 131 (KYFA…FKVQ), 144 to 229 (YRTF…TVEL), and 246 to 324 (EQLV…VKVW). The next 6 helical transmembrane spans lie at 48-68 (YFALCGLGGILSCGITHTAVV), 108-128 (APTFIGYSLQGLCKFGLYEVF), 147-167 (FVYLAASASAEFFADIALSPL), 207-227 (PLWGRQIPYTMMKFACFEKTV), 248-268 (LVVTFAAGYIAGVFCAIVSHP), and 304-324 (IIMIGTLTALQWFIYDAVKVW).

This sequence belongs to the mitochondrial carrier (TC 2.A.29) family.

It is found in the mitochondrion inner membrane. In terms of biological role, transport of phosphate groups from the cytosol to the mitochondrial matrix. This chain is Phosphate carrier protein, mitochondrial, found in Choristoneura fumiferana (Spruce budworm moth).